The following is a 513-amino-acid chain: Maturase K (513 aa).

It belongs to the intron maturase 2 family. MatK subfamily.

The protein resides in the plastid. The protein localises to the chloroplast. In terms of biological role, usually encoded in the trnK tRNA gene intron. Probably assists in splicing its own and other chloroplast group II introns. The sequence is that of Maturase K from Phragmites australis (Common reed).